Here is a 267-residue protein sequence, read N- to C-terminus: MKKLIFLLLIILLPVASFGATEITWYGHSSFKIQTPNGKVLLIDPWLTNPANKEGKRHLKELPKVDLILLTHAHGDHIGNSIEIAKETGAKLVATYDLGKAIVKYAGYPEKQFGYETTGNFGGEITLLNGEVKILFVPAVHSSALEIPDSPKSLIYGGNPGGFLISIKNGPTLYHTGDTDLFEDMKLLGLMYKVDIMMVCIGDKFTMGPKRAAIATKFVNPKMVIPMHFGTFPMLNGTVEEFEKEIAEQKIQTKILKIKIGETVKIE.

The protein belongs to the UPF0173 family.

This is UPF0173 metal-dependent hydrolase THEYE_A0282 from Thermodesulfovibrio yellowstonii (strain ATCC 51303 / DSM 11347 / YP87).